The chain runs to 388 residues: Alanine racemase (388 aa).

K44 serves as the catalytic Proton acceptor; specific for D-alanine. The residue at position 44 (K44) is an N6-(pyridoxal phosphate)lysine. R142 lines the substrate pocket. Y273 functions as the Proton acceptor; specific for L-alanine in the catalytic mechanism. M321 provides a ligand contact to substrate.

The protein belongs to the alanine racemase family. Requires pyridoxal 5'-phosphate as cofactor.

It carries out the reaction L-alanine = D-alanine. The protein operates within amino-acid biosynthesis; D-alanine biosynthesis; D-alanine from L-alanine: step 1/1. Functionally, catalyzes the interconversion of L-alanine and D-alanine. May also act on other amino acids. This chain is Alanine racemase (alr), found in Mycobacterium leprae (strain TN).